Reading from the N-terminus, the 199-residue chain is Pyridoxine/pyridoxamine 5'-phosphate oxidase (199 aa).

FMN is bound by residues 45–50 (RVVLLK), 60–61 (FT), R66, K67, and Q89. Substrate is bound at residue K50. 3 residues coordinate substrate: Y107, R111, and S115. FMN contacts are provided by residues 124–125 (QS) and W169. 175–177 (RIH) contributes to the substrate binding site. R179 contributes to the FMN binding site.

It belongs to the pyridoxamine 5'-phosphate oxidase family. As to quaternary structure, homodimer. FMN is required as a cofactor.

The enzyme catalyses pyridoxamine 5'-phosphate + O2 + H2O = pyridoxal 5'-phosphate + H2O2 + NH4(+). It catalyses the reaction pyridoxine 5'-phosphate + O2 = pyridoxal 5'-phosphate + H2O2. The protein operates within cofactor metabolism; pyridoxal 5'-phosphate salvage; pyridoxal 5'-phosphate from pyridoxamine 5'-phosphate: step 1/1. Its pathway is cofactor metabolism; pyridoxal 5'-phosphate salvage; pyridoxal 5'-phosphate from pyridoxine 5'-phosphate: step 1/1. Functionally, catalyzes the oxidation of either pyridoxine 5'-phosphate (PNP) or pyridoxamine 5'-phosphate (PMP) into pyridoxal 5'-phosphate (PLP). The sequence is that of Pyridoxine/pyridoxamine 5'-phosphate oxidase from Ehrlichia chaffeensis (strain ATCC CRL-10679 / Arkansas).